A 418-amino-acid chain; its full sequence is Serine--tRNA ligase (418 aa).

Thr-228 to Glu-230 serves as a coordination point for L-serine. ATP is bound by residues Arg-258–Glu-260 and Val-274. Residue Glu-281 participates in L-serine binding. Glu-345–Ser-348 is a binding site for ATP. Thr-381 contributes to the L-serine binding site.

It belongs to the class-II aminoacyl-tRNA synthetase family. Type-1 seryl-tRNA synthetase subfamily. Homodimer. The tRNA molecule binds across the dimer.

Its subcellular location is the cytoplasm. The enzyme catalyses tRNA(Ser) + L-serine + ATP = L-seryl-tRNA(Ser) + AMP + diphosphate + H(+). It catalyses the reaction tRNA(Sec) + L-serine + ATP = L-seryl-tRNA(Sec) + AMP + diphosphate + H(+). It functions in the pathway aminoacyl-tRNA biosynthesis; selenocysteinyl-tRNA(Sec) biosynthesis; L-seryl-tRNA(Sec) from L-serine and tRNA(Sec): step 1/1. Catalyzes the attachment of serine to tRNA(Ser). Is also able to aminoacylate tRNA(Sec) with serine, to form the misacylated tRNA L-seryl-tRNA(Sec), which will be further converted into selenocysteinyl-tRNA(Sec). The protein is Serine--tRNA ligase of Cenarchaeum symbiosum (strain A).